A 156-amino-acid polypeptide reads, in one-letter code: Transcriptional repressor NrdR (156 aa).

The segment at 3 to 34 (CPFCGNVDTQVKDSRPAEDHVAIRRRRFCPAC) is a zinc-finger region. An ATP-cone domain is found at 49-139 (LVVIKSNGKR…VYKNFQATGD (91 aa)).

The protein belongs to the NrdR family. The cofactor is Zn(2+).

Functionally, negatively regulates transcription of bacterial ribonucleotide reductase nrd genes and operons by binding to NrdR-boxes. This chain is Transcriptional repressor NrdR, found in Jannaschia sp. (strain CCS1).